The following is a 396-amino-acid chain: L-lactate dehydrogenase (396 aa).

Positions 1–380 constitute an FMN hydroxy acid dehydrogenase domain; it reads MIISAASDYR…SGDSLVQELG (380 aa). Position 24 (Y24) interacts with substrate. Residues S106 and Q127 each coordinate FMN. Y129 contributes to the substrate binding site. FMN is bound at residue T155. A substrate-binding site is contributed by R164. An FMN-binding site is contributed by K251. Residue H275 is the Proton acceptor of the active site. Residue R278 participates in substrate binding. 306–330 contributes to the FMN binding site; that stretch reads DSGIRNGLDVVRMIALGADTVLLGR.

This sequence belongs to the FMN-dependent alpha-hydroxy acid dehydrogenase family. The cofactor is FMN.

It is found in the cell inner membrane. The enzyme catalyses (S)-lactate + A = pyruvate + AH2. Catalyzes the conversion of L-lactate to pyruvate. Is coupled to the respiratory chain. In Salmonella paratyphi C (strain RKS4594), this protein is L-lactate dehydrogenase.